The following is a 288-amino-acid chain: Mortality factor 4-like protein 2 (288 aa).

Residues 1 to 15 (MSSRKQGSQPRGQQS) are compositionally biased toward polar residues. Residues 1–113 (MSSRKQGSQP…RADPTVESEE (113 aa)) are disordered. S71 is modified (phosphoserine). One can recognise an MRG domain in the interval 117–288 (NRMEVKVKIP…ASAEYHRKAL (172 aa)).

As to quaternary structure, component of the NuA4 histone acetyltransferase complex which contains the catalytic subunit KAT5/TIP60 and the subunits EP400, TRRAP/PAF400, BRD8/SMAP, EPC1, DMAP1/DNMAP1, RUVBL1/TIP49, RUVBL2, ING3, actin, ACTL6A/BAF53A, MORF4L1/MRG15, MORF4L2/MRGX, MRGBP, YEATS4/GAS41 and VPS72/YL1. The NuA4 complex interacts with MYC and the adenovirus E1A protein. MORF4L1 may also participate in the formation of NuA4 related complexes which lack the KAT5/TIP60 catalytic subunit, but which include the SWI/SNF related protein SRCAP. Component of the MSIN3A histone deacetylase complex, which includes SIN3A, HDAC2, ARID4B, MORF4L1, RBBP4/RbAp48, and RBBP7/RbAp46. Interacts with MRFAP1 and RB1. May also interact with one or more as yet undefined members of the TLE (transducin-like enhancer of split) family of transcriptional repressors.

Its subcellular location is the nucleus. Component of the NuA4 histone acetyltransferase complex which is involved in transcriptional activation of select genes principally by acetylation of nucleosomal histone H4 and H2A. This modification may both alter nucleosome - DNA interactions and promote interaction of the modified histones with other proteins which positively regulate transcription. This complex may be required for the activation of transcriptional programs associated with oncogene and proto-oncogene mediated growth induction, tumor suppressor mediated growth arrest and replicative senescence, apoptosis, and DNA repair. The NuA4 complex ATPase and helicase activities seem to be, at least in part, contributed by the association of RUVBL1 and RUVBL2 with EP400. NuA4 may also play a direct role in DNA repair when directly recruited to sites of DNA damage. Also a component of the MSIN3A complex which acts to repress transcription by deacetylation of nucleosomal histones. The sequence is that of Mortality factor 4-like protein 2 (MORF4L2) from Macaca fascicularis (Crab-eating macaque).